Reading from the N-terminus, the 86-residue chain is CLAVATA3/ESR (CLE)-related protein 8 (86 aa).

Positions 1 to 24 (MKVLKRDSMLLLITLYFLLTTSMA) are cleaved as a signal peptide. Residues 43-86 (DLKQNKAKPHLPNLFRTMRRVPTGPNPLHHISPPQPGSLNYARN) form a disordered region. 2 positions are modified to hydroxyproline: P64 and P67. P67 is a glycosylation site (O-linked (Ara...) hydroxyproline).

This sequence belongs to the CLV3/ESR signal peptide family. In terms of processing, the O-glycosylation (arabinosylation) of the hydroxyproline Pro-67 enhances binding affinity of the CLE8p peptide for its receptor. Mostly expressed in siliques, and, to a lower extent, in flowers. Expressed in young embryos and endosperm.

Its subcellular location is the secreted. It localises to the extracellular space. Functionally, extracellular signal peptide that regulates cell fate. Represses root apical meristem maintenance. Positively regulates the expression of the transcription factor WOX8 and thus, regulates early embryo development. Regulates the transition of protophloem cells from proliferation to differentiation, thus impinging on postembryonic growth capacity of the root meristem; this signaling pathway requires CRN and CLV2. This is CLAVATA3/ESR (CLE)-related protein 8 from Arabidopsis thaliana (Mouse-ear cress).